Here is an 878-residue protein sequence, read N- to C-terminus: Protein translocase subunit SecA (878 aa).

Residues Gln-81, Gly-99–Thr-103, and Asp-489 contribute to the ATP site.

The protein belongs to the SecA family.

The protein resides in the plastid. Its subcellular location is the chloroplast stroma. The protein localises to the chloroplast thylakoid membrane. The enzyme catalyses ATP + H2O + cellular proteinSide 1 = ADP + phosphate + cellular proteinSide 2.. In terms of biological role, has a central role in coupling the hydrolysis of ATP to the transfer of proteins across the thylakoid membrane. The protein is Protein translocase subunit SecA of Thalassiosira pseudonana (Marine diatom).